A 227-amino-acid polypeptide reads, in one-letter code: MRTDILDRKEEIAQWIAQGKSKAEIARMLSCSSNTLEAYLGKLGIVVIPTNRQYDNKYKSATEYLYNGSPISSYKLKNKILNEGLKPHKCESCGLESWLDKPIPLELEHKDGNHYNNEWDNLALLCPNCHALTPTHAGKNIGRYTERTVNTCAICHCEISSRATHCKSCTPKGITINPDITVEQIEYWVSKYSWIRASKELGLSDTGLRKRYKSLTGKDPKSIKKNR.

In terms of biological role, endonuclease that introduces double-strand break into pseudo palindromic 17 bp DNA sequence yielding 1 bp extensions with 3'-overhangs. The polypeptide is H-N-H endonuclease F-TflIV (Escherichia phage T5 (Enterobacteria phage T5)).